The sequence spans 1147 residues: Probable phospholipid-transporting ATPase IIB (1147 aa).

The Cytoplasmic segment spans residues 1 to 146 (MADQIPLYPV…NQKYNVFTFI (146 aa)). A helical transmembrane segment spans residues 147 to 168 (PGVLYEQFKFFLNLYFLVISCS). Topologically, residues 169 to 173 (QFVPA) are extracellular. The chain crosses the membrane as a helical span at residues 174–196 (LKIGYLYTYWAPLGFVLAVTMTR). Topologically, residues 197–380 (EAIDEFRRFQ…GLLDLELNRL (184 aa)) are cytoplasmic. A helical transmembrane segment spans residues 381–401 (TKALFLALVALSIVMVTLQGF). At 402–409 (VGPWYRNL) the chain is on the extracellular side. A helical transmembrane segment spans residues 410-431 (FRFLLLFSYIIPISLRVNLDMG). Residues 432-930 (KAVYGWMMMK…GRNSYKRSAA (499 aa)) lie on the Cytoplasmic side of the membrane. The active-site 4-aspartylphosphate intermediate is Asp468. ATP contacts are provided by Asp468, Lys469, and Thr470. Asp468 contacts Mg(2+). Thr470 is a binding site for Mg(2+). Residues 503 to 535 (RDSYSQMQSQAGGNNTGSTPLRKAQSSAPKVRK) are disordered. Positions 505–530 (SYSQMQSQAGGNNTGSTPLRKAQSSA) are enriched in polar residues. ATP-binding residues include Glu591, Phe633, Lys638, Lys657, Arg686, Thr687, Thr766, Gly767, Asp768, Arg848, and Lys854. Asp874 serves as a coordination point for Mg(2+). Asn877 and Asp878 together coordinate ATP. Asp878 provides a ligand contact to Mg(2+). Residues 931–951 (LGQFVMHRGLIISTMQAVFSS) traverse the membrane as a helical segment. Topologically, residues 952 to 963 (VFYFASVPLYQG) are extracellular. The helical transmembrane segment at 964–982 (FLMVGYATIYTMFPVFSLV) threads the bilayer. Over 983 to 1012 (LDQDVKPEMAMLYPELYKDLTKGRSLSFKT) the chain is Cytoplasmic. A helical membrane pass occupies residues 1013–1031 (FLIWVLISIYQGGILMYGA). The Extracellular portion of the chain corresponds to 1032–1038 (LVLFESE). Residues 1039-1061 (FVHVVAISFTALILTELLMVALT) form a helical membrane-spanning segment. The Cytoplasmic segment spans residues 1062-1067 (VRTWHW). Residues 1068–1088 (LMVVAEFLSLGCYVSSLAFLN) traverse the membrane as a helical segment. Over 1089–1105 (EYFGIGRVSFGAFLDVA) the chain is Extracellular. The helical transmembrane segment at 1106-1130 (FITTVTFLWKVSAITVVSCLPLYVL) threads the bilayer. Residues 1131–1147 (KYLRRKLSPPSYCKLAS) lie on the Cytoplasmic side of the membrane.

The protein belongs to the cation transport ATPase (P-type) (TC 3.A.3) family. Type IV subfamily. Requires Mg(2+) as cofactor.

Its subcellular location is the golgi apparatus. The protein resides in the trans-Golgi network membrane. It catalyses the reaction ATP + H2O + phospholipidSide 1 = ADP + phosphate + phospholipidSide 2.. This chain is Probable phospholipid-transporting ATPase IIB (ATP9B), found in Homo sapiens (Human).